A 117-amino-acid polypeptide reads, in one-letter code: Large ribosomal subunit protein bL19 (117 aa).

Belongs to the bacterial ribosomal protein bL19 family.

Its function is as follows. This protein is located at the 30S-50S ribosomal subunit interface and may play a role in the structure and function of the aminoacyl-tRNA binding site. The protein is Large ribosomal subunit protein bL19 of Paenarthrobacter aurescens (strain TC1).